The primary structure comprises 199 residues: Fe/S biogenesis protein NfuA (199 aa).

Positions 151 and 154 each coordinate [4Fe-4S] cluster.

This sequence belongs to the NfuA family. In terms of assembly, homodimer. Requires [4Fe-4S] cluster as cofactor.

Functionally, involved in iron-sulfur cluster biogenesis. Binds a 4Fe-4S cluster, can transfer this cluster to apoproteins, and thereby intervenes in the maturation of Fe/S proteins. Could also act as a scaffold/chaperone for damaged Fe/S proteins. The protein is Fe/S biogenesis protein NfuA of Xylella fastidiosa (strain 9a5c).